The following is a 90-amino-acid chain: Probable Fe(2+)-trafficking protein (90 aa).

Belongs to the Fe(2+)-trafficking protein family.

Could be a mediator in iron transactions between iron acquisition and iron-requiring processes, such as synthesis and/or repair of Fe-S clusters in biosynthetic enzymes. This is Probable Fe(2+)-trafficking protein from Albidiferax ferrireducens (strain ATCC BAA-621 / DSM 15236 / T118) (Rhodoferax ferrireducens).